A 357-amino-acid chain; its full sequence is Homoserine kinase (357 aa).

Lys133 participates in a covalent cross-link: Glycyl lysine isopeptide (Lys-Gly) (interchain with G-Cter in ubiquitin).

The protein belongs to the GHMP kinase family. Homoserine kinase subfamily. In terms of assembly, homodimer.

The enzyme catalyses L-homoserine + ATP = O-phospho-L-homoserine + ADP + H(+). It participates in amino-acid biosynthesis; L-threonine biosynthesis; L-threonine from L-aspartate: step 4/5. Its function is as follows. Commits homoserine to the threonine biosynthesis pathway by catalyzing its O-phosphorylation. The chain is Homoserine kinase (THR1) from Saccharomyces cerevisiae (strain ATCC 204508 / S288c) (Baker's yeast).